The sequence spans 780 residues: Probable trehalase (780 aa).

The interval 1 to 48 (MVDFLPKVTEINPPSEGNDGEDNIKPLSSGSEQRPLKEEGQQGGRRHH) is disordered. Residues serine 52 and serine 53 each carry the phosphoserine modification. Threonine 88 carries the post-translational modification Phosphothreonine. Serine 112 carries the phosphoserine modification. Residues arginine 331, 338-339 (WD), asparagine 375, arginine 384, 384-386 (RSQ), and glycine 505 contribute to the substrate site. Active-site proton donor/acceptor residues include aspartate 507 and glutamate 703.

This sequence belongs to the glycosyl hydrolase 37 family.

It catalyses the reaction alpha,alpha-trehalose + H2O = alpha-D-glucose + beta-D-glucose. The chain is Probable trehalase (NTH2) from Saccharomyces cerevisiae (strain ATCC 204508 / S288c) (Baker's yeast).